A 181-amino-acid polypeptide reads, in one-letter code: Adenylyl-sulfate kinase (181 aa).

ATP is bound at residue Gly-20 to Ser-27. Catalysis depends on Ser-94, which acts as the Phosphoserine intermediate.

The protein belongs to the APS kinase family.

The catalysed reaction is adenosine 5'-phosphosulfate + ATP = 3'-phosphoadenylyl sulfate + ADP + H(+). The protein operates within sulfur metabolism; hydrogen sulfide biosynthesis; sulfite from sulfate: step 2/3. In terms of biological role, catalyzes the synthesis of activated sulfate. The chain is Adenylyl-sulfate kinase from Deinococcus geothermalis (strain DSM 11300 / CIP 105573 / AG-3a).